Reading from the N-terminus, the 536-residue chain is Probable cytochrome P450 520A1 (536 aa).

A helical transmembrane segment spans residues 1–21 (MEILTFIIYLITFFILFDFYK). Cys479 contacts heme.

Belongs to the cytochrome P450 family. It depends on heme as a cofactor.

It is found in the membrane. The chain is Probable cytochrome P450 520A1 (cyp520A1) from Dictyostelium discoideum (Social amoeba).